The primary structure comprises 156 residues: Small ribosomal subunit protein uS7c (156 aa).

Belongs to the universal ribosomal protein uS7 family. As to quaternary structure, part of the 30S ribosomal subunit.

The protein resides in the plastid. The protein localises to the chloroplast. Its function is as follows. One of the primary rRNA binding proteins, it binds directly to 16S rRNA where it nucleates assembly of the head domain of the 30S subunit. This is Small ribosomal subunit protein uS7c (rps7) from Mesostigma viride (Green alga).